Here is a 1201-residue protein sequence, read N- to C-terminus: Autophagy-related protein 11 (1201 aa).

The disordered stretch occupies residues Phe90–Thr109. Residues Ser97–Thr109 show a composition bias toward polar residues. Positions Leu418–Leu452 form a coiled coil. Disordered regions lie at residues His458–Lys503 and Lys525–Gln545. Residues Arg485–Ser499 show a composition bias toward low complexity. The segment covering Lys525–Gln542 has biased composition (basic and acidic residues). 2 coiled-coil regions span residues Arg566 to Ala670 and Ser710 to Arg828. Disordered regions lie at residues Ser1052 to Asn1076 and Asp1115 to Pro1201. Over residues Arg1133–Leu1166 the composition is skewed to polar residues. The span at Glu1191–Pro1201 shows a compositional bias: basic and acidic residues.

It belongs to the ATG11 family. As to quaternary structure, homodimer and potential homooligomers.

Its subcellular location is the preautophagosomal structure membrane. Functionally, selective autophagy-specific protein required for pexophagy and mitophagy. In contrast to its Saccharomyces cerevisiae ATG11 ortholog, is not involved in non-selective autophagy nor in cytoplasm to vacuole transport (Cvt). The chain is Autophagy-related protein 11 from Aspergillus oryzae (strain ATCC 42149 / RIB 40) (Yellow koji mold).